We begin with the raw amino-acid sequence, 399 residues long: S-adenosylmethionine synthase (399 aa).

An ATP-binding site is contributed by histidine 16. Aspartate 18 contributes to the Mg(2+) binding site. Glutamate 44 contacts K(+). Glutamate 57 and glutamine 100 together coordinate L-methionine. A flexible loop region spans residues 100–110; that stretch reads QSPDIAQGVDT. Residues 175-177, 246-247, aspartate 255, 261-262, alanine 278, and lysine 282 each bind ATP; these read DGK, KF, and RK. Position 255 (aspartate 255) interacts with L-methionine. Position 286 (lysine 286) interacts with L-methionine. Residue lysine 341 forms an Isoglutamyl lysine isopeptide (Lys-Gln) (interchain with Q-Cter in protein Pup) linkage.

This sequence belongs to the AdoMet synthase family. As to quaternary structure, homotetramer; dimer of dimers. Requires Mg(2+) as cofactor. The cofactor is K(+).

It is found in the cytoplasm. The catalysed reaction is L-methionine + ATP + H2O = S-adenosyl-L-methionine + phosphate + diphosphate. Its pathway is amino-acid biosynthesis; S-adenosyl-L-methionine biosynthesis; S-adenosyl-L-methionine from L-methionine: step 1/1. In terms of biological role, catalyzes the formation of S-adenosylmethionine (AdoMet) from methionine and ATP. The overall synthetic reaction is composed of two sequential steps, AdoMet formation and the subsequent tripolyphosphate hydrolysis which occurs prior to release of AdoMet from the enzyme. The sequence is that of S-adenosylmethionine synthase from Mycolicibacterium smegmatis (strain ATCC 700084 / mc(2)155) (Mycobacterium smegmatis).